We begin with the raw amino-acid sequence, 185 residues long: Elongation factor P (185 aa).

Belongs to the elongation factor P family.

It is found in the cytoplasm. The protein operates within protein biosynthesis; polypeptide chain elongation. Functionally, involved in peptide bond synthesis. Stimulates efficient translation and peptide-bond synthesis on native or reconstituted 70S ribosomes in vitro. Probably functions indirectly by altering the affinity of the ribosome for aminoacyl-tRNA, thus increasing their reactivity as acceptors for peptidyl transferase. The polypeptide is Elongation factor P (Acetivibrio thermocellus (strain ATCC 27405 / DSM 1237 / JCM 9322 / NBRC 103400 / NCIMB 10682 / NRRL B-4536 / VPI 7372) (Clostridium thermocellum)).